Consider the following 145-residue polypeptide: Deoxyuridine 5'-triphosphate nucleotidohydrolase (145 aa).

Substrate is bound by residues 62-64, N75, and 79-81; these read RSG and TVD.

Belongs to the dUTPase family. Requires Mg(2+) as cofactor.

It carries out the reaction dUTP + H2O = dUMP + diphosphate + H(+). Its pathway is pyrimidine metabolism; dUMP biosynthesis; dUMP from dCTP (dUTP route): step 2/2. Functionally, this enzyme is involved in nucleotide metabolism: it produces dUMP, the immediate precursor of thymidine nucleotides and it decreases the intracellular concentration of dUTP so that uracil cannot be incorporated into DNA. This Gloeothece citriformis (strain PCC 7424) (Cyanothece sp. (strain PCC 7424)) protein is Deoxyuridine 5'-triphosphate nucleotidohydrolase.